A 510-amino-acid chain; its full sequence is Replication factor C large subunit (510 aa).

An ATP-binding site is contributed by 48-55 (GPPGTGKT). Residues 459–510 (MESMLERKREESEVEEEAKEIEEAVEKAEEEEEREEKKKEGGGEQRTLDAFF) form a disordered region. Over residues 493 to 510 (EEKKKEGGGEQRTLDAFF) the composition is skewed to basic and acidic residues.

It belongs to the activator 1 small subunits family. RfcL subfamily. Heteromultimer composed of small subunits (RfcS) and large subunits (RfcL).

Its function is as follows. Part of the RFC clamp loader complex which loads the PCNA sliding clamp onto DNA. The protein is Replication factor C large subunit of Methanopyrus kandleri (strain AV19 / DSM 6324 / JCM 9639 / NBRC 100938).